Here is a 354-residue protein sequence, read N- to C-terminus: Polyribonucleotide 5'-hydroxyl-kinase PF0112 (354 aa).

Residue 36-43 (GDVDTGKT) participates in ATP binding.

A divalent metal cation is required as a cofactor.

The catalysed reaction is a 5'-end dephospho-2'-deoxyribonucleoside-DNA + ATP = a 5'-end 5'-phospho-2'-deoxyribonucleoside-DNA + ADP + H(+). It catalyses the reaction a 5'-end dephospho-ribonucleoside-RNA + ATP = a 5'-end 5'-phospho-ribonucleoside-RNA + ADP + H(+). In terms of biological role, polynucleotide kinase that can phosphorylate the 5'-hydroxyl groups of both single-stranded RNA (ssRNA) and single-stranded DNA (ssDNA). Exhibits a strong preference for ssRNA. The protein is Polyribonucleotide 5'-hydroxyl-kinase PF0112 of Pyrococcus furiosus (strain ATCC 43587 / DSM 3638 / JCM 8422 / Vc1).